Here is a 309-residue protein sequence, read N- to C-terminus: tRNA dimethylallyltransferase (309 aa).

8–15 contributes to the ATP binding site; that stretch reads GPTATGKS. 10-15 contributes to the substrate binding site; the sequence is TATGKS. Positions 33–36 are interaction with substrate tRNA; sequence DSRQ.

Belongs to the IPP transferase family. In terms of assembly, monomer. Mg(2+) serves as cofactor.

The catalysed reaction is adenosine(37) in tRNA + dimethylallyl diphosphate = N(6)-dimethylallyladenosine(37) in tRNA + diphosphate. Functionally, catalyzes the transfer of a dimethylallyl group onto the adenine at position 37 in tRNAs that read codons beginning with uridine, leading to the formation of N6-(dimethylallyl)adenosine (i(6)A). The polypeptide is tRNA dimethylallyltransferase (Trichodesmium erythraeum (strain IMS101)).